The primary structure comprises 167 residues: Phosphopantetheine adenylyltransferase (167 aa).

A substrate-binding site is contributed by S11. ATP is bound by residues 11 to 12 and H19; that span reads SF. Residues K43, T76, and R90 each coordinate substrate. ATP-binding positions include 91-93, E101, and 126-132; these read GIR and YDALSST.

Belongs to the bacterial CoaD family. As to quaternary structure, homohexamer. The cofactor is Mg(2+).

It is found in the cytoplasm. The catalysed reaction is (R)-4'-phosphopantetheine + ATP + H(+) = 3'-dephospho-CoA + diphosphate. It participates in cofactor biosynthesis; coenzyme A biosynthesis; CoA from (R)-pantothenate: step 4/5. Functionally, reversibly transfers an adenylyl group from ATP to 4'-phosphopantetheine, yielding dephospho-CoA (dPCoA) and pyrophosphate. The sequence is that of Phosphopantetheine adenylyltransferase from Lacticaseibacillus paracasei (strain ATCC 334 / BCRC 17002 / CCUG 31169 / CIP 107868 / KCTC 3260 / NRRL B-441) (Lactobacillus paracasei).